The sequence spans 357 residues: Acyl-coenzyme A diphosphatase NUDT19 (357 aa).

Residues 10 to 242 (AATVMLAAGW…IWLAPPQFYE (233 aa)) form the Nudix hydrolase domain. The disordered stretch occupies residues 72 to 93 (PRFGLGPEPPRQPPFPGLSHGD). Over residues 78-87 (PEPPRQPPFP) the composition is skewed to pro residues. A Nudix box motif is present at residues 97 to 118 (AALPDDVALRICAIREAFEEAG). Mg(2+) contacts are provided by E112 and E116. N6-succinyllysine is present on K300. The Microbody targeting signal motif lies at 355-357 (AHL).

Belongs to the Nudix hydrolase family. Monomer. Mg(2+) serves as cofactor. The cofactor is Mn(2+). Highly expressed in the kidneys, with lower levels in skeletal muscle and brain (at protein level).

The protein localises to the peroxisome. It carries out the reaction an acyl-CoA + H2O = an acyl-4'-phosphopantetheine + adenosine 3',5'-bisphosphate + 2 H(+). The catalysed reaction is CoA + H2O = (R)-4'-phosphopantetheine + adenosine 3',5'-bisphosphate + 2 H(+). The enzyme catalyses hexanoyl-CoA + H2O = hexanoyl-4'-phosphopantetheine + adenosine 3',5'-bisphosphate + 2 H(+). It catalyses the reaction octanoyl-CoA + H2O = S-octanoyl-4'-phosphopantetheine + adenosine 3',5'-bisphosphate + 2 H(+). It carries out the reaction butanoyl-CoA + H2O = S-butanoyl-4'-phosphopantetheine + adenosine 3',5'-bisphosphate + 2 H(+). The catalysed reaction is propanoyl-CoA + H2O = propanoyl-4'-phosphopantetheine + adenosine 3',5'-bisphosphate + 2 H(+). The enzyme catalyses malonyl-CoA + H2O = malonyl-4'-phosphopantetheine + adenosine 3',5'-bisphosphate + 2 H(+). It catalyses the reaction succinyl-CoA + H2O = succinyl-4'-phosphopantetheine + adenosine 3',5'-bisphosphate + 2 H(+). It carries out the reaction choloyl-CoA + H2O = S-choloyl-4'-phosphopantetheine + adenosine 3',5'-bisphosphate + 2 H(+). The catalysed reaction is 4,8-dimethylnonanoyl-CoA + H2O = S-(4,8-dimethylnonanoyl)-4'-phosphopantetheine + adenosine 3',5'-bisphosphate + 2 H(+). The enzyme catalyses (9Z,12Z,15Z)-octadecatrienoyl-CoA + H2O = S-(9Z,12Z,15Z-octadecatrienoyl)-4'-phosphopantetheine + adenosine 3',5'-bisphosphate + 2 H(+). It catalyses the reaction (9Z,12Z)-octadecadienoyl-CoA + H2O = S-(9Z,12Z-octadecadienoyl)-4'-phosphopantetheine + adenosine 3',5'-bisphosphate + 2 H(+). It carries out the reaction (9Z)-hexadecenoyl-CoA + H2O = S-(9Z-hexadecenoyl)-4'-phosphopantetheine + adenosine 3',5'-bisphosphate + 2 H(+). The catalysed reaction is (9Z)-tetradecenoyl-CoA + H2O = S-(9Z-tetradecenoyl)-4'-phosphopantetheine + adenosine 3',5'-bisphosphate + 2 H(+). The enzyme catalyses (6Z)-octenoyl-CoA + H2O = S-(6Z-octenoyl)-4'-phosphopantetheine + adenosine 3',5'-bisphosphate + 2 H(+). It catalyses the reaction hexadecanoyl-CoA + H2O = S-hexadecanoyl-4'-phosphopantetheine + adenosine 3',5'-bisphosphate + 2 H(+). It carries out the reaction tetradecanoyl-CoA + H2O = tetradecanoyl-4'-phosphopantetheine + adenosine 3',5'-bisphosphate + 2 H(+). The catalysed reaction is dodecanoyl-CoA + H2O = S-dodecanoyl-4'-phosphopantetheine + adenosine 3',5'-bisphosphate + 2 H(+). The enzyme catalyses a 5'-end CoA-ribonucleoside in mRNA + H2O = a 5'-end phospho-adenosine-phospho-ribonucleoside in mRNA + (R)-4'-phosphopantetheine + 2 H(+). Its activity is regulated as follows. Inhibited by chenodeoxycholic acid (CDCA) and its conjugated derivatives, taurochenodeoxycholic acid and glycochenodeoxycholic acid. Inhibited by fluoride. Its function is as follows. Fatty acyl-coenzyme A (CoA) diphosphatase that hydrolyzes fatty acyl-CoA to yield acyl-4'-phosphopantetheine and adenosine 3',5'-bisphosphate. Mediates the hydrolysis of a wide range of CoA esters, including choloyl-CoA and branched-chain fatty-acyl-CoA esters and at low substrate concentrations medium and long-chain fatty-acyl-CoA esters are the primary substrates. Highest activity seen with medium-chain acyl-CoA esters and higher rates of activity seen with the unsaturated acyl-CoA esters compared with the saturated esters. Exhibits decapping activity towards dpCoA-capped RNAs in vitro. This Mus musculus (Mouse) protein is Acyl-coenzyme A diphosphatase NUDT19 (Nudt19).